Reading from the N-terminus, the 808-residue chain is Phospholipase D alpha 1 (808 aa).

Residues Met-1–Arg-30 constitute a propeptide that is removed on maturation. The region spanning Met-1–Val-125 is the C2 domain. Asp-186 lines the Ca(2+) pocket. Residues Thr-326 to Arg-364 enclose the PLD phosphodiesterase 1 domain. Catalysis depends on residues His-331, Lys-333, and Asp-338. His-331 is a binding site for a 1,2-diacyl-sn-glycero-3-phosphate. Residues His-370 and His-404 each contribute to the Ca(2+) site. Positions 520 and 659 each coordinate a 1,2-diacyl-sn-glycero-3-phosphate. The region spanning Phe-654–Ser-681 is the PLD phosphodiesterase 2 domain. Catalysis depends on residues His-659, Lys-661, and Asp-666. A Ca(2+)-binding site is contributed by Glu-720.

The protein belongs to the phospholipase D family. C2-PLD subfamily. Ca(2+) serves as cofactor. As to expression, expression is higher in radicle than in endosperm.

It localises to the cytoplasm. The protein localises to the membrane. It is found in the vacuole. The protein resides in the endoplasmic reticulum. Its subcellular location is the plastid. It localises to the cell membrane. The enzyme catalyses a 1,2-diacyl-sn-glycero-3-phosphocholine + H2O = a 1,2-diacyl-sn-glycero-3-phosphate + choline + H(+). Hydrolyzes glycerol-phospholipids at the terminal phosphodiesteric bond. Plays an important role in various cellular processes, including phytohormone action, vesicular trafficking, secretion, cytoskeletal arrangement, meiosis, tumor promotion, pathogenesis, membrane deterioration and senescence. The polypeptide is Phospholipase D alpha 1 (PLD1) (Ricinus communis (Castor bean)).